The sequence spans 132 residues: Small ribosomal subunit protein uS8 (132 aa).

The protein belongs to the universal ribosomal protein uS8 family. Part of the 30S ribosomal subunit. Contacts proteins S5 and S12.

Functionally, one of the primary rRNA binding proteins, it binds directly to 16S rRNA central domain where it helps coordinate assembly of the platform of the 30S subunit. This is Small ribosomal subunit protein uS8 from Anaeromyxobacter sp. (strain Fw109-5).